The following is a 471-amino-acid chain: Putative multidrug resistance protein MdtD (471 aa).

Helical transmembrane passes span 12-32 (LWIV…VNTA), 49-69 (MIIV…GWLA), 77-97 (IFFT…QAST), 106-126 (VLQG…VMKI), 138-158 (FVTL…GVLV), 165-185 (WIFL…LCLM), 195-215 (FDLS…LALD), 220-240 (LGIS…ALLL), 263-283 (FSLG…LPFM), 286-306 (VFLQ…MIPM), 342-362 (LLFM…VLFL), 393-413 (LLSM…GLLL), and 431-451 (VFLY…LIFS).

This sequence belongs to the major facilitator superfamily. TCR/Tet family.

The protein resides in the cell inner membrane. This is Putative multidrug resistance protein MdtD from Klebsiella pneumoniae (strain 342).